Reading from the N-terminus, the 49-residue chain is Large ribosomal subunit protein eL40 (49 aa).

Belongs to the eukaryotic ribosomal protein eL40 family.

The sequence is that of Large ribosomal subunit protein eL40 from Archaeoglobus fulgidus (strain ATCC 49558 / DSM 4304 / JCM 9628 / NBRC 100126 / VC-16).